Here is a 429-residue protein sequence, read N- to C-terminus: Protein S-Myc (429 aa).

A Phosphotyrosine; by Tyr-kinases modification is found at Y36. Residues 301–325 (PLPYAEDARPLKKPRSQDPLGPLKC) are disordered. The 53-residue stretch at 346-398 (ERRRNHNRMERQRRDIMRSSFLNLRDLVPELVHNEKAAKVVILKKATEYIHTL) folds into the bHLH domain. The segment at 398–419 (LQTDESKLLVEREKLYERKQQL) is leucine-zipper.

In terms of assembly, efficient DNA binding requires dimerization with another bHLH protein.

The protein localises to the nucleus. Its function is as follows. Has apoptosis-inducing activity. The chain is Protein S-Myc (Mycs) from Rattus norvegicus (Rat).